The sequence spans 1212 residues: MKSYGLSLTTAALGNEEKKMAAEKARGEGEEGSFSLTVEEKKALCGLDSSFFGFLTRCKDGAKMKTLLNKAIHFYESLIVKAEGKVESDFFCQLGHFNLLLEDYSKALSSYQRYYSLQTDYWKNAAFLYGLGLVYFYYNAFQWAIRAFQEVLYVDPNFCRAKEIHLRLGFMFKMNTDYESSLKHFQLALIDCNVCTLSSVEIQFHIAHLYETQRKYHSAKAAYEQLLQIESLPSQVKATVLQQLGWMHHNMDLIGDNTTKERYAIQYLQKSLEEDPNSGQSWYFLGRCYSCIGKVQDAFVSYRQSIDKSEASADTWCSIGVLYQQQNQPMDALQAYICAVQLDHGHAAAWMDLGILYESCNQPQDAIKCYLNAARSKSCNNTSALTSRIKFLQAQLCNLPQSSLQNKTKLLPSIEEAWSLPIPAELTSRQGAMNTAQQSVSDTWNSVQTASHHSVQQKVYTQCFTAQKLQSFGKDQQPPFQTGSTRYLQAASTNDQNQNGNHTLPQNSKGDAQNHFLRIPTSEEQKIINFTKESKDSRSKSLTSKTSRKDRDTSNICVNAKKHSNHIYQISSVPISSLNNKESVSPDLIIVDNPQLSVLVGETIDNVDHDIGTCNKVNNVHLAIHKKPDNLSASSPSSAISTETLSLKLTEQTHIVTSFISPHSGLHTINGEGHENLESSASVNVGLRPRSQIIPSMSVSIYSSSTEVLKACRSLGKNGLSNGHILLDICPPPRPPTSPYPPLPKEKLNPPTPSIYLENKRDAFFPPLHQFCINPKNPVTVIRGLAGALKLDLGLFSTKTLVEANNEHIVEVRTQLLQPADENWDPSGTKKIWRYENKSSHTTIAKYAQYQACSFQESLREENERRTQVKDYSDNESTCSDNSGRRQKAPFKTIKCGINIDLSDNKKWKLQLHELTKLPAFVRVVSAGNLLSHVGYTILGMNSVQLCMKVPGSRIPGHQENNNFCSVNINIGPGDCEWFVVPEDYWGVLNDFCEKNNLNFLMSSWWPNLEDLYEANVPVYRFIQRPGDLVWINAGTVHWVQAIGWCNNITWNVGPLTAFQYKLAVERYEWNKLQSVKSVVPMVHLSWNMARNIKVSDPKLFEMIKYCLLKILKHCQTLREALVAAGKEVLWHGRINDEPAPYCSICEVEVFNLLFVTNESNSQKTYIVHCQNCARKTSGNLENFVVLEQYKMEDLIQVYDQFTLAPSLSSAS.

TPR repeat units lie at residues 88 to 121 (SDFF…QTDY), 125 to 158 (AAFL…DPNF), 165 to 193 (HLRL…IDCN), 200 to 233 (VEIQ…ESLP), 245 to 278 (GWMH…DPNS), 279 to 312 (GQSW…SEAS), 313 to 346 (ADTW…DHGH), and 347 to 380 (AAAW…KSCN). Positions 530–539 (FTKESKDSRS) are enriched in basic and acidic residues. The disordered stretch occupies residues 530-555 (FTKESKDSRSKSLTSKTSRKDRDTSN). At threonine 752 the chain carries Phosphothreonine. The segment at 865–886 (RRTQVKDYSDNESTCSDNSGRR) is disordered. One can recognise a JmjC domain in the interval 907 to 1070 (KWKLQLHELT…YKLAVERYEW (164 aa)). The Fe cation site is built by histidine 958, glutamate 960, and histidine 1038. Zn(2+)-binding residues include cysteine 1143, cysteine 1146, cysteine 1170, and cysteine 1173.

Belongs to the UTX family. In terms of assembly, binds TLE1 and TLE2. L-ascorbate serves as cofactor. The cofactor is Fe(2+).

The protein localises to the nucleus. It catalyses the reaction N(6),N(6),N(6)-trimethyl-L-lysyl(27)-[histone H3] + 2 2-oxoglutarate + 2 O2 = N(6)-methyl-L-lysyl(27)-[histone H3] + 2 formaldehyde + 2 succinate + 2 CO2. Functionally, male-specific histone demethylase that catalyzes trimethylated 'Lys-27' (H3K27me3) demethylation in histone H3. Has relatively low KDM activity. This is Histone demethylase UTY (Uty) from Mus musculus (Mouse).